Consider the following 521-residue polypeptide: Probable protein kinase UbiB (521 aa).

In terms of domain architecture, Protein kinase spans 119-497 (SFDRQPVASA…QKRTNRLLQS (379 aa)). Residues 125–133 (VASASIAQV) and K151 contribute to the ATP site. Residue D286 is the Proton acceptor of the active site. A helical transmembrane segment spans residues 496–516 (QSLIYGGLGFVLGLLVMQLFV).

This sequence belongs to the ABC1 family. UbiB subfamily.

The protein localises to the cell inner membrane. Its pathway is cofactor biosynthesis; ubiquinone biosynthesis [regulation]. Its function is as follows. Is probably a protein kinase regulator of UbiI activity which is involved in aerobic coenzyme Q (ubiquinone) biosynthesis. This Acidovorax sp. (strain JS42) protein is Probable protein kinase UbiB.